A 61-amino-acid polypeptide reads, in one-letter code: Small ribosomal subunit protein uS14 (61 aa).

Zn(2+)-binding residues include cysteine 24, cysteine 27, cysteine 40, and cysteine 43.

It belongs to the universal ribosomal protein uS14 family. Zinc-binding uS14 subfamily. Part of the 30S ribosomal subunit. Contacts proteins S3 and S10. The cofactor is Zn(2+).

In terms of biological role, binds 16S rRNA, required for the assembly of 30S particles and may also be responsible for determining the conformation of the 16S rRNA at the A site. The chain is Small ribosomal subunit protein uS14 from Streptococcus thermophilus (strain CNRZ 1066).